The chain runs to 179 residues: ADP-ribosylation factor 1-like 1 (179 aa).

Gly-2 carries N-myristoyl glycine lipidation. The segment at 3 to 16 (LFFSKISSFMFPNI) is important for the stable binding to the membranes. Residues 24 to 32 (GLDGAGKTT), 126 to 129 (NKQD), and Ala-160 contribute to the GTP site.

Belongs to the small GTPase superfamily. Arf family.

Its subcellular location is the golgi apparatus membrane. The catalysed reaction is GTP + H2O = GDP + phosphate + H(+). Its activity is regulated as follows. Alternates between an inactive GDP-bound form and an active GTP-bound form. Activated by a guanine nucleotide-exchange factor (GEF) and inactivated by GTPase-activating protein (GAP). Functionally, small GTPase involved in protein trafficking between different compartments. Modulates vesicle budding and uncoating within the Golgi complex. In its GTP-bound form, triggers the recruitment of coatomer proteins to the Golgi membrane. The hydrolysis of ARF1-bound GTP, which is mediated by ARFGAPs proteins, is required for dissociation of coat proteins from Golgi membranes and vesicles. The sequence is that of ADP-ribosylation factor 1-like 1 (arf-1.1) from Caenorhabditis elegans.